The sequence spans 2188 residues: MRALGGITLLLAVAICQGYETYQRSSFRSSSSSSYGGGQTVPQLNSFASAHFNEVRELANQLKQKFNVLSQGSTNFAYTSPWSASILDLSGKSTLQLDQLSSEISRQLVQDMREGITNYHTIAQPNFFEAKAAELLERYSGAESASLQQTVGLGPYQPVDLSGFDEVKNYAYPAEVKVIDGKTYVVHRNCTEATKLSDYGSSGQLNSGFLGHQQTSLPLSSTTTTITRKKTIHDWVRENMEPSVVGYNSVVKLDGQLRNSALNQMVPLSPGSNVVIHRFNKTITTNPDGTSSVGGSEWQQRWQDGKLVYDHQQPFGQSTIPRDEQWKREERERLFWYLTTPQRLDDWQQQQEERLLGVVQRYQVSLPVLKEFHRRELARYEALLGQYQSRVQDTSSWQRQERGRLDWLIHQNGFTVQDIERWQNENARKLAEAARQHGISQNQLQQFQREELQRLYVHFNQVNESLAPQVPSVPQTTYNYQSSSSLTEDNTKEQQRLEELIRQHNATIAALQNSIKTDQQRLKNLSIKYQGDMQSQTQWLRGEVARIGDLIKEQNEQVSKITAWQSSERSRLENILLQHRGSVEEVQQRINMDRNYLQNLATKYQVSVEELEKWQKEELERLQVRGQQQLEEHIKDWQISVSSNLRDIATQNKLTIDEFQNYIINDRSHLEEMARLYKVKVEEIEQWIKSELKKFQSEGLLKGVEQELIQWQQKERERLQAIVQQNSLTVEQLEVRIKNDQDHFFKLADKYKINVEDIQDWLKKELLRLQSEGLVKAETLKEWQQQERAQISLLVQQNKYSLDEFERKMLADRARLQELSNTYNVKVSEIEQWIKSEGDRLQHEGQLRMESQLNNWQKIERQRLLDLINKNNLSIEEIESKISKDQTHLYSLAQQHQVRVEEIEQWIRQQIQKLQDQGLIEMQKLKNWQLEWRGNLTNMVQDRDFTVEEFHKWLLKDREQLQSLAMQHNVQIEEIEQFVKKEEQRFIGMGLLKPSEKLTNWQEVERLHLKNLAQQQYKSTEQLEARLRQDRELLERLARQYSVQVEEIESWMKQELARMRDEGQLQIDNLTSWQLAERERLEALIKQNKQWSAEELRAELEKDREHMQTMAFQYHTSVEEIEKWLQSEIERLKQQGKLNIEQLTAWQRTEQQRILSLLQQHSNITLEQFQAKVHNDRRFLMNLAEQHHVHIEEVDNYVKQVIEDLRKNGQFEIEQLQTWQRVERDYIKSLISEYKNSLSTAEYEEKLLADRAHLKHLADQYRINVEQIEEWMIAELKRLRGSTEETLKSLSAWQVSELERLQNLVKQQNHLTFVEFEMELNQERDRLQKLANQYSVNVVEIEEWLRQQLINLRTTGQAKVENLSKWQVEEQQRLIEMLLKKQQEMPYEQVERELTQDHARLQSLSQTHHVDIDHVDHWLREELRRLQSSGLVQIEQQTQWQQKISNGFNNWLEQQRNGASYQDFVDFLKRDKQRMDGIATDYHVTVEQVEKWVQKEAARLSLIGVIERPENNLKYEDISNIWVGDQTDSWKNELVTRLRSVTRQRPFTRQEFESYLIRNKPIFEQIARQYHVTIEDIHLWLDQSAKNEGLVTTEWQAKERLHIDNLINQQLRKQQRWTIEELELRLNNDQKHLQDAVAQYHVTVEELKVWYKDELNRLLEQRRIDRGSGISWQNIESQRIYLAIVNNPGISRQALENRLFRDVHVRASQYQITVEELRQFILSQLRRFSDMGLIVDNGRQANNWHDQERKRLREVVKGVVITEQELLDFISQDTSFQTQLAQSYQVGLEQLAPVQRIFIGNLAREQLLEQRRLNHLTTWQQRERDRLYEFIGNQNMTQTELKTWQIQDSKLLAEFAKRYEISVQQLSDWQKKELARINQLARYYGMSQSDLQQFREGELRQLAYINHRQLLSAAEAQKWEKRHQWTLSRLQSRYGKFGQELVAWRRTLYLLSQGLIDLPADSGSNGGYVVDAGSTNATAVYKPIFSKDRGDQPPHTYDESFVEGDEPGLEGETARPRPPNPAPIVSTPKPPLPYSRGGPSGGFEYRRQDYTFNVPVGSASASASGGPTGSSASASASLGKWNRASGDEPLQQEVDLGQQQQIEELGWNEKLEDLGQQTQVEDTDWNQQAEDLGQQQQVQVEDDLHFDQTQGHSSSSNSRSQPLQQATKVEVEATSEPSFWEKLKEKLG.

The N-terminal stretch at 1-18 (MRALGGITLLLAVAICQG) is a signal peptide. Coiled-coil stretches lie at residues 570–635 (SRLE…EHIK), 1009–1050 (LKNL…EIES), 1312–1343 (TFVEFEMELNQERDRLQKLANQYSVNVVEIEE), and 1613–1641 (KQQRWTIEELELRLNNDQKHLQDAVAQYH). The tract at residues 1984–2188 (IFSKDRGDQP…FWEKLKEKLG (205 aa)) is disordered. A compositionally biased stretch (basic and acidic residues) spans 1985–1998 (FSKDRGDQPPHTYD). A Cell attachment site motif is present at residues 1989–1991 (RGD). Residues 2000–2009 (SFVEGDEPGL) are compositionally biased toward acidic residues. A compositionally biased stretch (pro residues) spans 2016–2033 (PRPPNPAPIVSTPKPPLP). Composition is skewed to low complexity over residues 2057–2077 (GSASASASGGPTGSSASASAS) and 2091–2101 (QQEVDLGQQQQ). Residues 2115 to 2139 (GQQTQVEDTDWNQQAEDLGQQQQVQ) are compositionally biased toward polar residues. The segment covering 2148–2165 (QTQGHSSSSNSRSQPLQQ) has biased composition (low complexity). Residues 2179–2188 (FWEKLKEKLG) are compositionally biased toward basic and acidic residues.

Post-translationally, O-glycosylation by pgant3 is required for proper secretion and localization to the basal cell layer interface during wing development. In embryos, expressed in the apodemes (muscle attachment sites) of the major longitudinal muscles 4, 6, 7, 12 and 13 and the wide dorsal oblique muscles 9 and 10, in hemocytes, in fat body cells, in basement membranes surrounding the gut and in the commissures of the ventral nerve cord. Expressed in larval imaginal wing disk and in pupal wing. In adult flies, expressed in the jump muscle (at protein level).

It localises to the secreted. The protein resides in the extracellular space. It is found in the extracellular matrix. In terms of biological role, functions as a ligand for integrin alpha-PS2/beta-PS. Required in larvae for proper muscle structure and function. Involved in the regulation of cell adhesion during wing development. This is Tiggrin from Drosophila melanogaster (Fruit fly).